A 747-amino-acid polypeptide reads, in one-letter code: Protein tyrosine phosphatase domain-containing protein 1 (747 aa).

The segment at 1–36 (MAAGVLPQNEDPYSTLVNSSGHAAHMDENSGRPAPK) is disordered. Residues 11 to 21 (DPYSTLVNSSG) are compositionally biased toward polar residues. A Tyrosine-protein phosphatase domain is found at 82–253 (YSSWVTDNIL…LAPLRNIFSC (172 aa)). The active-site Phosphocysteine intermediate is the C190. Phosphoserine is present on residues S392, S394, and S543. A disordered region spans residues 549 to 570 (SSPKAQFPHGQETQDSTDLSEA).

The protein belongs to the protein-tyrosine phosphatase family. Non-receptor class PTPDC1 subfamily.

Functionally, may play roles in cilia formation and/or maintenance. This Mus musculus (Mouse) protein is Protein tyrosine phosphatase domain-containing protein 1 (Ptpdc1).